The following is a 222-amino-acid chain: PLASMODESMATA CALLOSE-BINDING PROTEIN 4 (222 aa).

The signal sequence occupies residues methionine 1–alanine 19. Cysteine 22 and cysteine 83 form a disulfide bridge. Low complexity predominate over residues alanine 88–proline 187. Residues alanine 88–glycine 199 form a disordered region. Residue asparagine 197 is the site of GPI-anchor amidated asparagine attachment. A propeptide spans alanine 198–isoleucine 222 (removed in mature form).

Contains two additional disulfide bonds.

Its subcellular location is the cell membrane. It is found in the cell junction. The protein localises to the plasmodesma. This is PLASMODESMATA CALLOSE-BINDING PROTEIN 4 (PDCB4) from Arabidopsis thaliana (Mouse-ear cress).